The following is a 304-amino-acid chain: Methionyl-tRNA formyltransferase (304 aa).

Position 107-110 (107-110) interacts with (6S)-5,6,7,8-tetrahydrofolate; it reads SLLP.

Belongs to the Fmt family.

The enzyme catalyses L-methionyl-tRNA(fMet) + (6R)-10-formyltetrahydrofolate = N-formyl-L-methionyl-tRNA(fMet) + (6S)-5,6,7,8-tetrahydrofolate + H(+). Its function is as follows. Attaches a formyl group to the free amino group of methionyl-tRNA(fMet). The formyl group appears to play a dual role in the initiator identity of N-formylmethionyl-tRNA by promoting its recognition by IF2 and preventing the misappropriation of this tRNA by the elongation apparatus. The chain is Methionyl-tRNA formyltransferase from Coprothermobacter proteolyticus (strain ATCC 35245 / DSM 5265 / OCM 4 / BT).